We begin with the raw amino-acid sequence, 279 residues long: Four and a half LIM domains protein 2 (279 aa).

The C4-type zinc finger occupies 7–31 (CHHCEDSLFGRKYVLREEQPYCVAC). LIM zinc-binding domains follow at residues 40 to 92 (CEEC…CTDC), 101 to 153 (CQEC…CVPC), and 162 to 212 (CVQC…CLGC). Lys-78 participates in a covalent cross-link: Glycyl lysine isopeptide (Lys-Gly) (interchain with G-Cter in SUMO2). Residues Lys-167 and Lys-220 each participate in a glycyl lysine isopeptide (Lys-Gly) (interchain with G-Cter in SUMO2) cross-link. Residues 221 to 275 (CAGCANPISGLGGTKYISFEERQWHNDCFNCKKCSLSLVGRGFLTERDDILCPDC) form the LIM zinc-binding 4 domain. Ser-238 bears the Phosphoserine mark.

Interacts with ZNF638 and TTN/titin. Interacts with E4F1. Interacts with GRB7. Interacts with SIRT1 and FOXO1. Interacts with CEFIP and calcineurin. Interacts with FOXK1.

The protein localises to the cytoplasm. It is found in the nucleus. Its subcellular location is the myofibril. The protein resides in the sarcomere. It localises to the z line. Its function is as follows. May function as a molecular transmitter linking various signaling pathways to transcriptional regulation. Negatively regulates the transcriptional repressor E4F1 and may function in cell growth. Inhibits the transcriptional activity of FOXO1 and its apoptotic function by enhancing the interaction of FOXO1 with SIRT1 and FOXO1 deacetylation. Negatively regulates the calcineurin/NFAT signaling pathway in cardiomyocytes. The chain is Four and a half LIM domains protein 2 (FHL2) from Bos taurus (Bovine).